The primary structure comprises 294 residues: tRNA pseudouridine synthase B (294 aa).

Residue Asp38 is the Nucleophile of the active site.

It belongs to the pseudouridine synthase TruB family. Type 1 subfamily.

The enzyme catalyses uridine(55) in tRNA = pseudouridine(55) in tRNA. In terms of biological role, responsible for synthesis of pseudouridine from uracil-55 in the psi GC loop of transfer RNAs. This is tRNA pseudouridine synthase B from Clostridium perfringens (strain SM101 / Type A).